Here is a 206-residue protein sequence, read N- to C-terminus: RNA pyrophosphohydrolase (206 aa).

Positions 6 to 149 constitute a Nudix hydrolase domain; it reads GYRPNVGIVL…KRGVYARALR (144 aa). Residues 38-59 carry the Nudix box motif; the sequence is GGMNTDETPVEAMYRELQEETG. The disordered stretch occupies residues 175–206; it reads MPGHTAGHDRPRKRPRTRGYWPKKATGDGPAS.

Belongs to the Nudix hydrolase family. RppH subfamily. The cofactor is a divalent metal cation.

Its function is as follows. Accelerates the degradation of transcripts by removing pyrophosphate from the 5'-end of triphosphorylated RNA, leading to a more labile monophosphorylated state that can stimulate subsequent ribonuclease cleavage. The sequence is that of RNA pyrophosphohydrolase from Stenotrophomonas maltophilia (strain K279a).